A 663-amino-acid chain; its full sequence is Methionine--tRNA ligase (663 aa).

Residues 13-23 (PYTNGPCHLGH) carry the 'HIGH' region motif. Zn(2+) is bound by residues cysteine 144, cysteine 147, cysteine 156, and cysteine 160. A 'KMSKS' region motif is present at residues 326–330 (KFSKS). Lysine 329 lines the ATP pocket. A tRNA-binding domain is found at 565-663 (EFGKMKLIVG…QAVEPGTPIR (99 aa)).

Belongs to the class-I aminoacyl-tRNA synthetase family. MetG type 1 subfamily. As to quaternary structure, homodimer. Requires Zn(2+) as cofactor.

It localises to the cytoplasm. The catalysed reaction is tRNA(Met) + L-methionine + ATP = L-methionyl-tRNA(Met) + AMP + diphosphate. Functionally, is required not only for elongation of protein synthesis but also for the initiation of all mRNA translation through initiator tRNA(fMet) aminoacylation. The protein is Methionine--tRNA ligase of Methanosphaerula palustris (strain ATCC BAA-1556 / DSM 19958 / E1-9c).